Consider the following 450-residue polypeptide: Tripartite motif-containing protein 64C (450 aa).

Residues 15–56 form an RING-type zinc finger; that stretch reads CCICVNYFIDPVTTDCVHSFCRPCLCLCSEEGRAPMRCPLCR. The B box-type zinc-finger motif lies at 87 to 128; the sequence is SSDNICVLHEETKELFCEADKRLLCGPCSESPEHMAHSHSPI. 4 residues coordinate Zn(2+): Cys-92, His-95, Cys-114, and His-120. Residues 191–218 adopt a coiled-coil conformation; it reads DEEEQRHLQALEREAKELFQQLQDSQVR. A B30.2/SPRY domain is found at 269–450; that stretch reads ELTSWCITGV…LRPFFCFGCT (182 aa).

Belongs to the TRIM/RBCC family.

The polypeptide is Tripartite motif-containing protein 64C (TRIM64C) (Homo sapiens (Human)).